Consider the following 226-residue polypeptide: Phosphoribosyl-dephospho-CoA transferase (226 aa).

Residues aspartate 148 and aspartate 150 contribute to the active site.

This sequence belongs to the MdcG family.

It carries out the reaction apo-[malonate decarboxylase ACP] + 2'-(5''-triphospho-alpha-D-ribosyl)-3'-dephospho-CoA = holo-[malonate decarboxylase ACP] + diphosphate. In terms of biological role, transfers 2'-(5-triphosphoribosyl)-3'-dephosphocoenzyme-A to the apo-[acyl-carrier-protein] of the malonate decarboxylase to yield holo-[acyl-carrier-protein]. The protein is Phosphoribosyl-dephospho-CoA transferase of Bradyrhizobium diazoefficiens (strain JCM 10833 / BCRC 13528 / IAM 13628 / NBRC 14792 / USDA 110).